A 474-amino-acid chain; its full sequence is Tubulin gamma-2 chain (474 aa).

142 to 148 (AGGTGSG) contacts GTP.

Belongs to the tubulin family. Gamma-tubulin complex is composed of gamma-tubulin and GCP proteins.

It localises to the cytoplasm. The protein localises to the cytoskeleton. It is found in the microtubule organizing center. Its subcellular location is the nucleus. The protein resides in the cell cortex. Its function is as follows. Tubulin is the major constituent of microtubules. The gamma chain is found at microtubule organizing centers (MTOC) such as the spindle poles, suggesting that it is involved in the minus-end nucleation of microtubule assembly. In terms of biological role, gamma-tubulin complex is essential for the control of microtubular network remodeling in the course of initiation and development of giant-feeding cells, and for the successful reproduction of nematodes (e.g. Meloidogyne spp.) in their plant hosts. In Arabidopsis thaliana (Mouse-ear cress), this protein is Tubulin gamma-2 chain (TUBG2).